Consider the following 210-residue polypeptide: uncharacterized protein (210 aa).

The segment covering 101–114 (QELPEPSSPQSQSS) has biased composition (low complexity). Positions 101-166 (QELPEPSSPQ…SSGVSSDLQK (66 aa)) are disordered. Over residues 147–164 (RSTSPVTASTSSGVSSDL) the composition is skewed to polar residues.

This is an uncharacterized protein from Alcelaphine herpesvirus 1 (strain C500) (AlHV-1).